The chain runs to 405 residues: Serine-type anaerobic sulfatase-maturating enzyme (405 aa).

A Radical SAM core domain is found at 18–249; that stretch reads PRSPVPFHIL…QWRKRCDRGR (232 aa). The [4Fe-4S] cluster site is built by Cys35 and Cys39. Position 41 (Tyr41) interacts with S-adenosyl-L-methionine. Position 42 (Cys42) interacts with [4Fe-4S] cluster. Residues Gly84, Ser140, and Arg152 each coordinate S-adenosyl-L-methionine. Cys270, Cys276, and Cys291 together coordinate [4Fe-4S] cluster. The active-site Proton acceptor is Asp292. 5 residues coordinate [4Fe-4S] cluster: Cys331, Cys334, Cys340, Cys344, and Cys357.

The protein belongs to the radical SAM superfamily. Anaerobic sulfatase-maturating enzyme family. Monomer. Interacts with AtsA prior to its export to the periplasm. [4Fe-4S] cluster serves as cofactor.

It localises to the cytoplasm. It carries out the reaction L-seryl-[sulfatase] + S-adenosyl-L-methionine = 3-oxo-L-alanyl-[sulfatase] + 5'-deoxyadenosine + L-methionine + H(+). Its pathway is protein modification; sulfatase oxidation. Its function is as follows. Involved in 'Ser-type' sulfatase maturation under anaerobic conditions. Catalyzes the post-translational modification of serine ('Ser-72' in the arylsulfatase AtsA) into 3-oxoalanine (also known as C(alpha)-formylglycine (FGly)), by a free radical chemical mechanism initiated via the reductive cleavage of S-adenosyl-L-methionine (SAM). This is Serine-type anaerobic sulfatase-maturating enzyme from Klebsiella aerogenes (Enterobacter aerogenes).